A 614-amino-acid chain; its full sequence is uncharacterized protein (614 aa).

The next 2 helical transmembrane spans lie at valine 494–leucine 516 and leucine 552–alanine 574. Residues alanine 588 to serine 614 form a disordered region. Basic and acidic residues predominate over residues proline 591 to glutamate 605.

It localises to the cell membrane. This is an uncharacterized protein from Treponema pallidum (strain Nichols).